The sequence spans 545 residues: Chaperonin GroEL (545 aa).

ATP is bound by residues 30-33 (TLGP), Lys51, 87-91 (DGTTT), Gly415, and Asp495.

It belongs to the chaperonin (HSP60) family. As to quaternary structure, forms a cylinder of 14 subunits composed of two heptameric rings stacked back-to-back. Interacts with the co-chaperonin GroES.

It is found in the cytoplasm. It carries out the reaction ATP + H2O + a folded polypeptide = ADP + phosphate + an unfolded polypeptide.. Together with its co-chaperonin GroES, plays an essential role in assisting protein folding. The GroEL-GroES system forms a nano-cage that allows encapsulation of the non-native substrate proteins and provides a physical environment optimized to promote and accelerate protein folding. In Shewanella putrefaciens (strain CN-32 / ATCC BAA-453), this protein is Chaperonin GroEL.